The chain runs to 271 residues: 3-methyl-2-oxobutanoate hydroxymethyltransferase (271 aa).

Residues D51 and D90 each contribute to the Mg(2+) site. 3-methyl-2-oxobutanoate is bound by residues D51 to S52, D90, and K118. Residue E120 participates in Mg(2+) binding. Residue E186 is the Proton acceptor of the active site.

This sequence belongs to the PanB family. As to quaternary structure, homodecamer; pentamer of dimers. It depends on Mg(2+) as a cofactor.

Its subcellular location is the cytoplasm. It carries out the reaction 3-methyl-2-oxobutanoate + (6R)-5,10-methylene-5,6,7,8-tetrahydrofolate + H2O = 2-dehydropantoate + (6S)-5,6,7,8-tetrahydrofolate. It participates in cofactor biosynthesis; (R)-pantothenate biosynthesis; (R)-pantoate from 3-methyl-2-oxobutanoate: step 1/2. Catalyzes the reversible reaction in which hydroxymethyl group from 5,10-methylenetetrahydrofolate is transferred onto alpha-ketoisovalerate to form ketopantoate. This chain is 3-methyl-2-oxobutanoate hydroxymethyltransferase, found in Xanthomonas oryzae pv. oryzae (strain PXO99A).